The primary structure comprises 370 residues: Aminomethyltransferase (370 aa).

This sequence belongs to the GcvT family. In terms of assembly, the glycine cleavage system is composed of four proteins: P, T, L and H.

It catalyses the reaction N(6)-[(R)-S(8)-aminomethyldihydrolipoyl]-L-lysyl-[protein] + (6S)-5,6,7,8-tetrahydrofolate = N(6)-[(R)-dihydrolipoyl]-L-lysyl-[protein] + (6R)-5,10-methylene-5,6,7,8-tetrahydrofolate + NH4(+). Functionally, the glycine cleavage system catalyzes the degradation of glycine. This chain is Aminomethyltransferase, found in Prochlorococcus marinus (strain MIT 9301).